The sequence spans 378 residues: Stimulator of interferon genes protein (378 aa).

2 helical membrane passes run 21–41 and 46–66; these read AAFV…EPAD and WLVL…LCSL. 2 S-palmitoyl cysteine lipidation sites follow: Cys88 and Cys91. 2 helical membrane passes run 89–109 and 114–134; these read LGCP…YTFL and GLPF…NILL. Residues 153–339 form a cyclic dinucleotide-binding domain (CBD) region; sequence FNVAHGLAWS…KHLKQEEKEE (187 aa). 2',3'-cGAMP-binding residues include Ser162, Tyr167, Arg238, and Thr263. Residues Ser162, Tyr167, 238-241, and Thr263 each bind 3',3'-c-di-GMP; that span reads RVYT. The 2',3'-cUAMP site is built by Tyr167, Arg238, and Thr263. The tract at residues 339–378 is C-terminal tail (CTT); it reads EVTVGTMGSSGVLESSTLDKEPQLLISGMDQPLPLRTDVF. Ser354 is subject to Phosphoserine. Thr355 is subject to Phosphothreonine. Residues 362–365 carry the pLxIS motif motif; sequence LLIS. A Phosphoserine; by TBK1 modification is found at Ser365.

It belongs to the STING family. In terms of assembly, homodimer; forms a homodimer in absence of cyclic nucleotide (c-di-GMP or cGAMP). Homotetramer; in presence of cyclic nucleotide (c-di-GMP or cGAMP), forms tetramers and higher-order oligomers through side-by-side packing. Interacts (when phosphorylated) with IRF3; following activation and phosphorylation on the pLxIS motif by TBK1, recruits IRF3. Interacts with TBK1; when homodimer, leading to subsequent production of IFN-beta. Phosphorylation by TBK1 leads to activation and production of IFN-beta. Following cyclic nucleotide (c-di-GMP or cGAMP)-binding, activation and translocation from the endoplasmic reticulum, STING1 is phosphorylated by TBK1 at Ser-365 in the pLxIS motif. The phosphorylated pLxIS motif constitutes an IRF3-binding motif, leading to recruitment of the transcription factor IRF3 to induce type-I interferons and other cytokines. In contrast, lacks phosphorylation site at position 357, leading to reduced production of type-I interferons and other cytokines.

It is found in the endoplasmic reticulum membrane. Its subcellular location is the cytoplasm. It localises to the perinuclear region. The protein localises to the endoplasmic reticulum-Golgi intermediate compartment membrane. The protein resides in the golgi apparatus membrane. It is found in the cytoplasmic vesicle. Its subcellular location is the autophagosome membrane. It localises to the mitochondrion outer membrane. The protein localises to the cell membrane. It catalyses the reaction H(+)(in) = H(+)(out). Its function is as follows. Facilitator of innate immune signaling that acts as a sensor of cytosolic DNA from bacteria and viruses and promotes low production of type I interferon (IFN-alpha and IFN-beta). Compared to other mammals, STING1-dependent type I interferon induction is strongly reduced in bats, suggesting that the cGAS-STING pathway promotes a limited inflammatory response. Innate immune response is triggered in response to non-CpG double-stranded DNA from viruses and bacteria delivered to the cytoplasm. Acts by binding cyclic dinucleotides: recognizes and binds cyclic di-GMP (c-di-GMP), a second messenger produced by bacteria, cyclic UMP-AMP (2',3'-cUAMP), and cyclic GMP-AMP (cGAMP), a messenger produced by CGAS in response to DNA virus in the cytosol. Upon binding to c-di-GMP, cUAMP or cGAMP, STING1 oligomerizes, translocates from the endoplasmic reticulum and is phosphorylated by TBK1 on the pLxIS motif, leading to recruitment and subsequent activation of the transcription factor IRF3 to induce expression of type I interferon and exert a potent anti-viral state. In addition to promote the production of type I interferons, plays a direct role in autophagy. Following cGAMP-binding, STING1 buds from the endoplasmic reticulum into COPII vesicles, which then form the endoplasmic reticulum-Golgi intermediate compartment (ERGIC). The ERGIC serves as the membrane source for WIPI2 recruitment and LC3 lipidation, leading to formation of autophagosomes that target cytosolic DNA or DNA viruses for degradation by the lysosome. Promotes autophagy by acting as a proton channel that directs proton efflux from the Golgi to facilitate MAP1LC3B/LC3B lipidation. The autophagy- and interferon-inducing activities can be uncoupled and autophagy induction is independent of TBK1 phosphorylation. This Rhinolophus ferrumequinum (Greater horseshoe bat) protein is Stimulator of interferon genes protein.